The chain runs to 81 residues: Small ribosomal subunit protein bS16 (81 aa).

The protein belongs to the bacterial ribosomal protein bS16 family.

The polypeptide is Small ribosomal subunit protein bS16 (Neisseria gonorrhoeae (strain ATCC 700825 / FA 1090)).